Here is a 74-residue protein sequence, read N- to C-terminus: MKTLQCDICRKEVDNSLPERLYWTFREYDVCEDCKESIEDKLRPIIRTHQPYSQGWYENQFMGMVQRGVSNRRP.

This is an uncharacterized protein from Treponema pallidum (strain Nichols).